A 423-amino-acid polypeptide reads, in one-letter code: Inactive autotransporter heptosyltransferase BimC (423 aa).

Residues 1 to 10 (MPKVTFSGSA) are compositionally biased toward polar residues. The disordered stretch occupies residues 1–49 (MPKVTFSGSAPTLGVHAPPALDPRQPASPPPAASNGTHARGFSPPADMP). Fe(3+)-binding residues include cysteine 371, cysteine 374, cysteine 390, and cysteine 402.

This sequence belongs to the glycosyltransferase 9 family. In terms of assembly, homotrimer or homotetramer. Fe(3+) is required as a cofactor.

The protein resides in the cell inner membrane. Its subcellular location is the cytoplasm. Functionally, iron-binding protein which is required for the asymmetric polar distribution of the autotransporter BimA on the bacterial surface prior to its translocation into bacterial periplasm. Lacks heptosyltransferase activity. The chain is Inactive autotransporter heptosyltransferase BimC from Burkholderia thailandensis (strain ATCC 700388 / DSM 13276 / CCUG 48851 / CIP 106301 / E264).